Here is a 342-residue protein sequence, read N- to C-terminus: MITIDGSYGEGGGQILRTSIALSAITGEPVRIINIRANRPNPGLRPQHLHGILALKHLANADVKGAHVGSRELVFIPKRLEAKKVEVNIGTAGSITLVLQALLPAMAFAKNRVEFKITGGTDVPWSPPVDYLANVTLFALEKLGIMAGIKIVRRGHYPKGGGIIEGYVEPWKERRELVATKYSSIAKVEGISHATNLPAHVAERQAKAAKEELSKLEVPVKIKTEVSKSLGPGSGIVVWAETDCLRLGGDALGKRGKPAEVVGKEAAQELLEQLKPGYCVDKFLGDQLIPFLAFSGGEIWVSEVTNHLKTNIWVVENFLGKVFDLDGEVGKPGKVKVVRRVE.

ATP contacts are provided by residues Q100 and 283 to 287; that span reads FLGDQ. Residue H307 is the Tele-AMP-histidine intermediate of the active site.

It belongs to the RNA 3'-terminal cyclase family. Type 1 subfamily.

It localises to the cytoplasm. It catalyses the reaction a 3'-end 3'-phospho-ribonucleotide-RNA + ATP = a 3'-end 2',3'-cyclophospho-ribonucleotide-RNA + AMP + diphosphate. Catalyzes the conversion of 3'-phosphate to a 2',3'-cyclic phosphodiester at the end of RNA. The mechanism of action of the enzyme occurs in 3 steps: (A) adenylation of the enzyme by ATP; (B) transfer of adenylate to an RNA-N3'P to produce RNA-N3'PP5'A; (C) and attack of the adjacent 2'-hydroxyl on the 3'-phosphorus in the diester linkage to produce the cyclic end product. The biological role of this enzyme is unknown but it is likely to function in some aspects of cellular RNA processing. In Pyrococcus abyssi (strain GE5 / Orsay), this protein is RNA 3'-terminal phosphate cyclase (rtcA).